Here is a 459-residue protein sequence, read N- to C-terminus: ATP-dependent RNA helicase me31b (459 aa).

The tract at residues 1 to 267 (MMTEKLNSGH…EINLMEELTL (267 aa)) is recA-like domain 1. A phosphoserine mark is found at Ser8 and Ser29. The short motif at 58–86 (NEFEEFCLKRELLMGIFEKGWERPSPIQE) is the Q motif element. Positions 89–259 (IPIALSGKDV…EKHLREPYEI (171 aa)) constitute a Helicase ATP-binding domain. Position 102–109 (102–109 (AKNGTGKT)) interacts with ATP. A DEAD box motif is present at residues 207–210 (DEAD). The tract at residues 264 to 431 (ELTLKGVTQY…PKVIDPALYV (168 aa)) is gyf binding. The region spanning 269–429 (GVTQYYAFVQ…PIPKVIDPAL (161 aa)) is the Helicase C-terminal domain. The recA-like domain 2 stretch occupies residues 432–459 (ANVGASVGDTCNNSDLNNSANEEGNVSK). A Phosphoserine modification is found at Ser450.

It belongs to the DEAD box helicase family. DDX6/DHH1 subfamily. In terms of assembly, conserved component of different types of multiprotein ribonucleoprotein complexes (RNPs) that form distinct germ granules (P-body, nuage, sponge body or polar granules) and P-body-like neuronal RNPs. Consequently it interacts with a wide variety of proteins, some of which appear to be common interactive partners in almost all RNPs types i.e. cup and tral, whereas other interactions are specific to a germ granule/RNP. Core functional components in me31B-containing RNPs include RNA regulatory proteins (such as translational repressor, RNA-decapping and exonuclease proteins), RNA localization proteins and additional proteins depending on the biological context of the RNPs. In the P-body RNPs, interacts with at least the translation repressor proteins tral, cup and Edc3, and the mRNA localization factor yps. Interaction with tral or Edc3 is required for translation repression and possibly RNA decapping; binding to tral and Edc3 is mutually exclusive. In the nuage and germ plasm polar granule RNPs, interacts with at least tral, cup, and additional proteins required for assembly and function of the germ granules such as tud, vas and aub. Interacts (when dimethylated on Arg residues) with tud; interaction is RNA-independent. Component of the osk RNP complex, which is composed of at least me31B, exu, yps, aret/bruno, cup, and the mRNA of osk. Component of the nanos RNP complex, which is composed of at least smg, cup, tral, me31B, the CCR4-NOT complex members Rga/NOT2 and Caf1-55, and the mRNA of nanos (nos). Interacts with tral and piRNA pathway components papi and AGO3; promotes interaction between nuage RNPs and the piRNA-mediated transposon silencing. Forms a RNP containing at least me31B, eIF4E1, cup, tral and pAbp; this interaction is required for the translational silencing of maternal mRNAs during the maternal-to-zygotic transition. In the sponge body, forms a RNP containing at least me31B, exu, yps and the mRNA of osk; interactions with exu and yps are RNA dependent. Component of a neuronal RNP, at least composed of me31B, tral and Fmr1. Component of the Atx2-Not1 repressor complex, composed of at least me31B, Atx2, tyf and pAbp. Interacts (via the C-terminus) with Atx2, tyf, pAbp and Lsm12a. Interacts (via RecA-like domain 2) with 4EHP-GYF2 complex member Gyf (via the me31B binding motif). Interacts with 4E-T, Edc3 and Patr-1. In terms of processing, symmetrically dimethylated on arginine residues. As to expression, ubiquitously expressed throughout the brain (at protein level). Expressed in the olfactory system including the antennal lobes, projection neurons, local interneurons, mushroom-body Kenyon cells and glial cells (at protein level).

It is found in the cytoplasm. Its subcellular location is the cytoplasmic ribonucleoprotein granule. The protein localises to the P-body. The protein resides in the endoplasmic reticulum. It localises to the cell projection. It is found in the dendrite. The enzyme catalyses ATP + H2O = ADP + phosphate + H(+). Its function is as follows. ATP-dependent RNA helicase which is a core component of a variety of ribonucleoprotein complexes (RNPs) that play critical roles in translational repression and mRNA decapping during embryogenesis, oogenesis, neurogenesis and neurotransmission. Recruits core components and translational repressors to some RNP complexes, and mediates RNP aggregation into processing granules such as P-bodies. As part of a RNP complex containing tral, eIF4E1, cup, and pAbp, involved in RNP-mediated translational repression of maternal mRNAs during oogenesis and embryogenesis. As part of a RNP complex containing tral and the RNA localization factors exu and yps, mediates translational silencing of mRNAs such as osk/oskar and bcd/bicoid during their transport to the oocyte in order to prevent their translation until they reach their positional destinations. In neurons and possibly imaginal disks, involved in miRNA-mediated translational repression, possibly in association with components of the piRNA transposon silencing pathway. Involved in RNA localization and protein trafficking in the oocyte. As part of an ER-associated RNP containing tral, cup and yps, required for tral-dependent ER exit site formation and consequently efficient trafficking of proteins such as grk and yl through the secretory pathway. Component of neuron RNPs that mediate transport and translation of neuronal RNAs, including translation repression of synaptic transcripts in preparation for their dendritic targeting. As part of the Atx2-Not1 repressor complex promotes Not1-dependent post-transcriptional gene silencing in adult circadian pacemaker neurons in order to sustain high-amplitude circadian rhythms and Pdf cycling in a per-independent manner. Promotes the interaction between Atx2 and Not1 within the Atx2-Not1 RNP complex. Recruited to the 4EHP-GYF2 complex by Gyf, where it plays a role in 4EHP-GYF2 mediated translational repression and mRNA decay. The chain is ATP-dependent RNA helicase me31b (me31B) from Drosophila melanogaster (Fruit fly).